A 242-amino-acid chain; its full sequence is Ras-like protein family member 11A (242 aa).

A small GTPase-like region spans residues 17-241; it reads ESSSDYLLPK…SPKVKAPSAL (225 aa). Residues 34–41, 81–85, and 147–150 each bind GTP; these read GAGRVGKS, DTPGG, and NKGD.

The protein belongs to the small GTPase superfamily. Ras family. As to quaternary structure, interacts with UBF/UBTF. In terms of tissue distribution, widely expressed. Down-regulated in prostate tumors compared to normal prostate tissue. High levels found in colon tumor and normal colon tissue followed by small intestine, liver, jejunum, ileum, bladder and aorta. Lowest levels observed in endothelial cells.

The protein localises to the nucleus. It is found in the nucleolus. It catalyses the reaction GTP + H2O = GDP + phosphate + H(+). Functionally, regulator of rDNA transcription. Acts in cooperation UBF/UBTF and positively regulates RNA polymerase I transcription. In Homo sapiens (Human), this protein is Ras-like protein family member 11A.